Reading from the N-terminus, the 352-residue chain is Fe-S cluster assembly protein DRE2 (352 aa).

The segment covering methionine 1–aspartate 11 has biased composition (polar residues). The segment at methionine 1 to alanine 24 is disordered. Positions methionine 1–leucine 196 are N-terminal SAM-like domain. Residues leucine 196 to alanine 237 form a linker region. [2Fe-2S] cluster is bound by residues cysteine 243, cysteine 257, cysteine 260, and cysteine 262. Residues cysteine 243–cysteine 262 form a fe-S binding site A region. 4 residues coordinate [4Fe-4S] cluster: cysteine 315, cysteine 318, cysteine 326, and cysteine 329. 2 consecutive short sequence motifs (cx2C motif) follow at residues cysteine 315–cysteine 318 and cysteine 326–cysteine 329. The fe-S binding site B stretch occupies residues cysteine 315–cysteine 329.

This sequence belongs to the anamorsin family. In terms of assembly, monomer. Interacts with TAH18. Interacts with MIA40. It depends on [2Fe-2S] cluster as a cofactor. The cofactor is [4Fe-4S] cluster.

The protein localises to the cytoplasm. It localises to the mitochondrion intermembrane space. In terms of biological role, component of the cytosolic iron-sulfur (Fe-S) protein assembly (CIA) machinery required for the maturation of extramitochondrial Fe-S proteins. Part of an electron transfer chain functioning in an early step of cytosolic Fe-S biogenesis, facilitating the de novo assembly of a [4Fe-4S] cluster on the scaffold complex CFD1-NBP35. Electrons are transferred to DRE2 from NADPH via the FAD- and FMN-containing protein TAH18. TAH18-DRE2 are also required for the assembly of the diferric tyrosyl radical cofactor of ribonucleotide reductase (RNR), probably by providing electrons for reduction during radical cofactor maturation in the catalytic small subunit RNR2. This is Fe-S cluster assembly protein DRE2 from Coprinopsis cinerea (strain Okayama-7 / 130 / ATCC MYA-4618 / FGSC 9003) (Inky cap fungus).